The following is a 542-amino-acid chain: Phosphoenolpyruvate carboxykinase (ATP) (542 aa).

Arginine 67, tyrosine 208, and lysine 214 together coordinate substrate. ATP contacts are provided by residues lysine 214, histidine 233, and glycine 249–threonine 257. Mn(2+) contacts are provided by lysine 214 and histidine 233. Aspartate 270 serves as a coordination point for Mn(2+). ATP-binding positions include glutamate 298, arginine 334, arginine 450 to isoleucine 451, and threonine 456. Residue arginine 334 participates in substrate binding.

It belongs to the phosphoenolpyruvate carboxykinase (ATP) family. As to quaternary structure, monomer. Requires Mn(2+) as cofactor.

The protein resides in the cytoplasm. The catalysed reaction is oxaloacetate + ATP = phosphoenolpyruvate + ADP + CO2. Its pathway is carbohydrate biosynthesis; gluconeogenesis. Its function is as follows. Involved in the gluconeogenesis. Catalyzes the conversion of oxaloacetate (OAA) to phosphoenolpyruvate (PEP) through direct phosphoryl transfer between the nucleoside triphosphate and OAA. This is Phosphoenolpyruvate carboxykinase (ATP) from Vibrio vulnificus (strain YJ016).